The following is a 452-amino-acid chain: Probable pectate lyase 9 (452 aa).

An N-terminal signal peptide occupies residues 1-25; it reads MATSSLKLTSACFVLLFIFVGCVLT. N-linked (GlcNAc...) asparagine glycans are attached at residues Asn88, Asn139, Asn214, and Asn233. Position 250 (Asp250) interacts with Ca(2+). Asn271 carries an N-linked (GlcNAc...) asparagine glycan. The Ca(2+) site is built by Asp274 and Asp278. N-linked (GlcNAc...) asparagine glycosylation is found at Asn281 and Asn305. The active site involves Arg330. A glycan (N-linked (GlcNAc...) asparagine) is linked at Asn374.

It belongs to the polysaccharide lyase 1 family. Ca(2+) is required as a cofactor.

It catalyses the reaction Eliminative cleavage of (1-&gt;4)-alpha-D-galacturonan to give oligosaccharides with 4-deoxy-alpha-D-galact-4-enuronosyl groups at their non-reducing ends.. Its pathway is glycan metabolism; pectin degradation; 2-dehydro-3-deoxy-D-gluconate from pectin: step 2/5. This Arabidopsis thaliana (Mouse-ear cress) protein is Probable pectate lyase 9.